We begin with the raw amino-acid sequence, 249 residues long: Pyridoxine 5'-phosphate synthase (249 aa).

Asn-7 provides a ligand contact to 3-amino-2-oxopropyl phosphate. Position 9–10 (9–10) interacts with 1-deoxy-D-xylulose 5-phosphate; it reads DH. Arg-18 lines the 3-amino-2-oxopropyl phosphate pocket. His-43 functions as the Proton acceptor in the catalytic mechanism. Residues Arg-45 and His-50 each coordinate 1-deoxy-D-xylulose 5-phosphate. The active-site Proton acceptor is Glu-70. A 1-deoxy-D-xylulose 5-phosphate-binding site is contributed by Thr-100. His-190 acts as the Proton donor in catalysis. 3-amino-2-oxopropyl phosphate is bound by residues Gly-191 and 212 to 213; that span reads GH.

The protein belongs to the PNP synthase family. In terms of assembly, homooctamer; tetramer of dimers.

The protein localises to the cytoplasm. The catalysed reaction is 3-amino-2-oxopropyl phosphate + 1-deoxy-D-xylulose 5-phosphate = pyridoxine 5'-phosphate + phosphate + 2 H2O + H(+). The protein operates within cofactor biosynthesis; pyridoxine 5'-phosphate biosynthesis; pyridoxine 5'-phosphate from D-erythrose 4-phosphate: step 5/5. Its function is as follows. Catalyzes the complicated ring closure reaction between the two acyclic compounds 1-deoxy-D-xylulose-5-phosphate (DXP) and 3-amino-2-oxopropyl phosphate (1-amino-acetone-3-phosphate or AAP) to form pyridoxine 5'-phosphate (PNP) and inorganic phosphate. This is Pyridoxine 5'-phosphate synthase from Synechococcus sp. (strain CC9605).